The chain runs to 118 residues: Ribonuclease P protein component (118 aa).

The protein belongs to the RnpA family. In terms of assembly, consists of a catalytic RNA component (M1 or rnpB) and a protein subunit.

It carries out the reaction Endonucleolytic cleavage of RNA, removing 5'-extranucleotides from tRNA precursor.. Functionally, RNaseP catalyzes the removal of the 5'-leader sequence from pre-tRNA to produce the mature 5'-terminus. It can also cleave other RNA substrates such as 4.5S RNA. The protein component plays an auxiliary but essential role in vivo by binding to the 5'-leader sequence and broadening the substrate specificity of the ribozyme. The protein is Ribonuclease P protein component of Shewanella amazonensis (strain ATCC BAA-1098 / SB2B).